The following is a 250-amino-acid chain: tRNA (guanine-N(1)-)-methyltransferase (250 aa).

Residues glycine 113 and isoleucine 133–leucine 138 contribute to the S-adenosyl-L-methionine site.

Belongs to the RNA methyltransferase TrmD family. As to quaternary structure, homodimer.

Its subcellular location is the cytoplasm. The catalysed reaction is guanosine(37) in tRNA + S-adenosyl-L-methionine = N(1)-methylguanosine(37) in tRNA + S-adenosyl-L-homocysteine + H(+). In terms of biological role, specifically methylates guanosine-37 in various tRNAs. The protein is tRNA (guanine-N(1)-)-methyltransferase of Shewanella amazonensis (strain ATCC BAA-1098 / SB2B).